A 92-amino-acid polypeptide reads, in one-letter code: Small ribosomal subunit protein uS19 (92 aa).

Belongs to the universal ribosomal protein uS19 family.

Its function is as follows. Protein S19 forms a complex with S13 that binds strongly to the 16S ribosomal RNA. The sequence is that of Small ribosomal subunit protein uS19 from Bradyrhizobium sp. (strain BTAi1 / ATCC BAA-1182).